The sequence spans 143 residues: Small ribosomal subunit protein bS6 (143 aa).

The interval 95–143 is disordered; the sequence is GPDTEQSFIMKSKDDKGDKPERRRRDDDENGDVGVSNDSDNDGGNAEAA. Residues 105–121 are compositionally biased toward basic and acidic residues; that stretch reads KSKDDKGDKPERRRRDD.

This sequence belongs to the bacterial ribosomal protein bS6 family.

Functionally, binds together with bS18 to 16S ribosomal RNA. The sequence is that of Small ribosomal subunit protein bS6 from Xylella fastidiosa (strain M23).